A 924-amino-acid chain; its full sequence is Ubiquitin carboxyl-terminal hydrolase 15 (924 aa).

The Zn(2+) site is built by Cys130, Cys133, Cys141, Cys144, Cys150, Cys154, His163, and Cys167. The MYND-type zinc-finger motif lies at 130–167; it reads CARCFGPAKTRCSRCKSVRYCSGKCQIIHWRVAHKDEC. Residues 226–236 are compositionally biased toward polar residues; it reads DITPQINTQGR. 2 disordered regions span residues 226 to 301 and 317 to 366; these read DITP…VDSS and SHKH…TSKK. Positions 247–256 are enriched in basic and acidic residues; the sequence is ANRESCRRDS. Polar residues predominate over residues 331 to 362; the sequence is GCPNTQYPSNGTRTATLPRTGINKSGEQSCTE. The region spanning 438–744 is the USP domain; the sequence is RGLVNCGNSC…GAYMLFYMRS (307 aa). Cys447 serves as the catalytic Nucleophile. His703 serves as the catalytic Proton acceptor. Positions 750–793 are disordered; it reads RGEHNGKAPVHHSQPRNEMKEQRKPVNRFKPRADHKNTESSSSE. Residues 764 to 773 are compositionally biased toward basic and acidic residues; the sequence is PRNEMKEQRK.

It belongs to the peptidase C19 family. In terms of assembly, interacts with DA1. Highly expressed in rosette leaves and inflorescence. Expressed at low levels in cotyledons, stems, cauline leaves and siliques.

It is found in the cytoplasm. It localises to the nucleus. It catalyses the reaction Thiol-dependent hydrolysis of ester, thioester, amide, peptide and isopeptide bonds formed by the C-terminal Gly of ubiquitin (a 76-residue protein attached to proteins as an intracellular targeting signal).. In terms of biological role, recognizes and hydrolyzes the peptide bond at the C-terminal Gly of ubiquitin. Involved in the processing of poly-ubiquitin precursors as well as that of ubiquitinated proteins. Involved in the regulation of organ size. Acts as a positive regulator of cell proliferation. Possesses deubiquitinating enzyme activity in vitro. The enzyme activity of UBP15 is required for its function in regulation of cell proliferation. Functions antagonistically in a common pathway with DA1 to regulate seed size. Acts maternally to regulate seed size by promoting cell proliferation in the integuments of ovules and developing seeds. Functions independently of DA2 and BB. This chain is Ubiquitin carboxyl-terminal hydrolase 15, found in Arabidopsis thaliana (Mouse-ear cress).